An 84-amino-acid chain; its full sequence is RQC P-site tRNA stabilizing factor (84 aa).

The S4 RNA-binding domain occupies 1-64 (MRIDKFLQSV…IEEYTILQIP (64 aa)).

The protein belongs to the RqcP family. In terms of assembly, associates with stalled 50S ribosomal subunits. Binds to RqcH, 23S rRNA and the P-site tRNA. Does not require RqcH for association with 50S subunits.

Functionally, key component of the ribosome quality control system (RQC), a ribosome-associated complex that mediates the extraction of incompletely synthesized nascent chains from stalled ribosomes and their subsequent degradation. RqcH recruits Ala-charged tRNA, and with RqcP directs the elongation of stalled nascent chains on 50S ribosomal subunits, leading to non-templated C-terminal alanine extensions (Ala tail). The Ala tail promotes nascent chain degradation. RqcP is associated with the translocation-like movement of the peptidyl-tRNA from the A-site into the P-site. This chain is RQC P-site tRNA stabilizing factor, found in Helicobacter pylori (strain J99 / ATCC 700824) (Campylobacter pylori J99).